A 444-amino-acid polypeptide reads, in one-letter code: Nuclear distribution protein PAC1 (444 aa).

The stretch at 59–87 (TAIARLQRRIMSLEQNIRDLREASIEMNA) forms a coiled coil. 7 WD repeats span residues 113–152 (TLESPVTGVRLHPELAVVFVSTEQGRLHCFDLMDITLPLA), 156–199 (AHTR…KLLR), 204–251 (HEHV…CLKS), 254–293 (PHSDWVRCLDVYGEFLITGCQDSTLRLTHWPSGNGLSVGL), 307–347 (SLQD…RLPQ), 367–406 (GHDSWIKAVGSRGDHVFTASDDKSVICWNWTNGQCLKKWN), and 408–444 (IHQGFVTCIDLDDSNHPLKRKIMVTGGIDCKCHIFMQ).

It belongs to the WD repeat LIS1/nudF family. Self-associates. Interacts with NDL1 and dynein.

The protein localises to the cytoplasm. It is found in the cytoskeleton. It localises to the spindle pole. In terms of biological role, positively regulates the activity of the minus-end directed microtubule motor protein dynein. Plays a central role in positioning the mitotic spindle at the bud neck during cell division. Targets cytoplasmic dynein to microtubule plus ends, thereby promoting dynein-mediated microtubule sliding along the bud cortex and consequently the movement of the mitotic spindle to the bud neck. The chain is Nuclear distribution protein PAC1 from Zygosaccharomyces rouxii (strain ATCC 2623 / CBS 732 / NBRC 1130 / NCYC 568 / NRRL Y-229).